We begin with the raw amino-acid sequence, 171 residues long: Large ribosomal subunit protein bL9 (171 aa).

It belongs to the bacterial ribosomal protein bL9 family.

Its function is as follows. Binds to the 23S rRNA. The polypeptide is Large ribosomal subunit protein bL9 (Rickettsia prowazekii (strain Madrid E)).